A 469-amino-acid chain; its full sequence is Sulfate adenylyltransferase subunit 1 (469 aa).

Positions 22-236 (KDMLRVLTCG…LLNTVSVEQD (215 aa)) constitute a tr-type G domain. Residues 31 to 38 (GSVDDGKS) form a G1 region. 31–38 (GSVDDGKS) provides a ligand contact to GTP. The tract at residues 89–93 (GITID) is G2. The segment at 110-113 (DTPG) is G3. GTP-binding positions include 110–114 (DTPGH) and 165–168 (NKMD). Residues 165 to 168 (NKMD) form a G4 region. Residues 202-204 (SAL) form a G5 region.

Belongs to the TRAFAC class translation factor GTPase superfamily. Classic translation factor GTPase family. CysN/NodQ subfamily. In terms of assembly, heterodimer composed of CysD, the smaller subunit, and CysN.

The enzyme catalyses sulfate + ATP + H(+) = adenosine 5'-phosphosulfate + diphosphate. The protein operates within sulfur metabolism; hydrogen sulfide biosynthesis; sulfite from sulfate: step 1/3. In terms of biological role, with CysD forms the ATP sulfurylase (ATPS) that catalyzes the adenylation of sulfate producing adenosine 5'-phosphosulfate (APS) and diphosphate, the first enzymatic step in sulfur assimilation pathway. APS synthesis involves the formation of a high-energy phosphoric-sulfuric acid anhydride bond driven by GTP hydrolysis by CysN coupled to ATP hydrolysis by CysD. This Shewanella woodyi (strain ATCC 51908 / MS32) protein is Sulfate adenylyltransferase subunit 1.